The primary structure comprises 594 residues: Cytoplasmic polyadenylation element-binding protein 2 (594 aa).

Residues 72–90 show a composition bias toward basic and acidic residues; that stretch reads KEREKVDEEKEGVERREEN. 2 disordered regions span residues 72–91 and 367–388; these read KERE…EENG and GGGF…STSE. Residues 367-378 show a composition bias toward gly residues; sequence GGGFNSGSGSGN. In terms of domain architecture, RRM spans 458 to 540; it reads LVAFIGGVPR…KRVEIKPYFF (83 aa).

Functionally, cytoplasmic polyadenylation element binding protein that binds to and regulates the translation of specific mRNAs. This is Cytoplasmic polyadenylation element-binding protein 2 (cpb-2) from Caenorhabditis japonica.